The sequence spans 393 residues: Lipid-A-disaccharide synthase (393 aa).

It belongs to the LpxB family.

It carries out the reaction a lipid X + a UDP-2-N,3-O-bis[(3R)-3-hydroxyacyl]-alpha-D-glucosamine = a lipid A disaccharide + UDP + H(+). Its pathway is bacterial outer membrane biogenesis; LPS lipid A biosynthesis. Condensation of UDP-2,3-diacylglucosamine and 2,3-diacylglucosamine-1-phosphate to form lipid A disaccharide, a precursor of lipid A, a phosphorylated glycolipid that anchors the lipopolysaccharide to the outer membrane of the cell. The polypeptide is Lipid-A-disaccharide synthase (Actinobacillus pleuropneumoniae serotype 7 (strain AP76)).